A 266-amino-acid chain; its full sequence is Hydroxyethylthiazole kinase (266 aa).

M46 contributes to the substrate binding site. ATP contacts are provided by K122 and T166. A substrate-binding site is contributed by G193.

The protein belongs to the Thz kinase family. It depends on Mg(2+) as a cofactor.

It carries out the reaction 5-(2-hydroxyethyl)-4-methylthiazole + ATP = 4-methyl-5-(2-phosphooxyethyl)-thiazole + ADP + H(+). It participates in cofactor biosynthesis; thiamine diphosphate biosynthesis; 4-methyl-5-(2-phosphoethyl)-thiazole from 5-(2-hydroxyethyl)-4-methylthiazole: step 1/1. Functionally, catalyzes the phosphorylation of the hydroxyl group of 4-methyl-5-beta-hydroxyethylthiazole (THZ). This chain is Hydroxyethylthiazole kinase, found in Caldivirga maquilingensis (strain ATCC 700844 / DSM 13496 / JCM 10307 / IC-167).